The sequence spans 152 residues: MKTPIELKILDSRIGSEFPLPAYATLGSAGMDLRAMIDTTMTIAPGETQLIPTGIAIHVADPGLAAVILPRSGLGHKHGIVLGNLVGLIDSDYQGPLMVSCWNRSNSPFTLDIGDRLAQLVFVPVVQAQFKLVDEFDSSDRGEGGFGHSGTK.

Residues 71–73 (RSG), Asn-84, 88–90 (LID), and Met-98 contribute to the substrate site.

Belongs to the dUTPase family. Mg(2+) is required as a cofactor.

The enzyme catalyses dUTP + H2O = dUMP + diphosphate + H(+). Its pathway is pyrimidine metabolism; dUMP biosynthesis; dUMP from dCTP (dUTP route): step 2/2. In terms of biological role, this enzyme is involved in nucleotide metabolism: it produces dUMP, the immediate precursor of thymidine nucleotides and it decreases the intracellular concentration of dUTP so that uracil cannot be incorporated into DNA. The protein is Deoxyuridine 5'-triphosphate nucleotidohydrolase of Shewanella putrefaciens (strain CN-32 / ATCC BAA-453).